Consider the following 101-residue polypeptide: Small ribosomal subunit protein uS14 (101 aa).

The span at 1–10 (MAKNSMVERD) shows a compositional bias: basic and acidic residues. Residues 1–20 (MAKNSMVERDRKRRKLAQKY) form a disordered region.

This sequence belongs to the universal ribosomal protein uS14 family. In terms of assembly, part of the 30S ribosomal subunit. Contacts proteins S3 and S10.

Its function is as follows. Binds 16S rRNA, required for the assembly of 30S particles and may also be responsible for determining the conformation of the 16S rRNA at the A site. The chain is Small ribosomal subunit protein uS14 from Halorhodospira halophila (strain DSM 244 / SL1) (Ectothiorhodospira halophila (strain DSM 244 / SL1)).